A 37-amino-acid chain; its full sequence is Large ribosomal subunit protein bL36 (37 aa).

It belongs to the bacterial ribosomal protein bL36 family.

In Dehalococcoides mccartyi (strain ATCC BAA-2266 / KCTC 15142 / 195) (Dehalococcoides ethenogenes (strain 195)), this protein is Large ribosomal subunit protein bL36.